Reading from the N-terminus, the 397-residue chain is Enoyl-[acyl-carrier-protein] reductase [NADH] (397 aa).

NAD(+) contacts are provided by residues G48–Y53, F74–E75, D111–A112, and V139–A140. A substrate-binding site is contributed by Y225. Residue Y235 is the Proton donor of the active site. NAD(+) is bound by residues K244 and V273–T275.

Belongs to the TER reductase family. In terms of assembly, monomer.

The catalysed reaction is a 2,3-saturated acyl-[ACP] + NAD(+) = a (2E)-enoyl-[ACP] + NADH + H(+). It functions in the pathway lipid metabolism; fatty acid biosynthesis. Its function is as follows. Involved in the final reduction of the elongation cycle of fatty acid synthesis (FAS II). Catalyzes the reduction of a carbon-carbon double bond in an enoyl moiety that is covalently linked to an acyl carrier protein (ACP). The protein is Enoyl-[acyl-carrier-protein] reductase [NADH] of Burkholderia mallei (strain NCTC 10247).